Consider the following 390-residue polypeptide: 3-ketoacyl-CoA thiolase (390 aa).

The Acyl-thioester intermediate role is filled by Cys95. Active-site proton acceptor residues include His346 and Cys376.

The protein belongs to the thiolase-like superfamily. Thiolase family. Heterotetramer of two alpha chains (FadB) and two beta chains (FadA).

The protein localises to the cytoplasm. It carries out the reaction an acyl-CoA + acetyl-CoA = a 3-oxoacyl-CoA + CoA. It functions in the pathway lipid metabolism; fatty acid beta-oxidation. Its function is as follows. Catalyzes the final step of fatty acid oxidation in which acetyl-CoA is released and the CoA ester of a fatty acid two carbons shorter is formed. The chain is 3-ketoacyl-CoA thiolase from Acinetobacter baumannii (strain AB307-0294).